Here is a 917-residue protein sequence, read N- to C-terminus: ABC transporter A family member 12 (917 aa).

6 helical membrane-spanning segments follow: residues 34–54, 323–343, 377–397, 409–429, 435–455, and 508–528; these read LILV…VLDA, IASL…FPVI, FLTI…AIGL, FVFY…VSSI, TVTV…SFLF, and GEVF…AYYI. Residues 595 to 832 form the ABC transporter domain; that stretch reads ILCDNLKKVY…YGGSYVFTMT (238 aa). ATP is bound at residue 633-640; it reads GPNGAGKT.

The protein belongs to the ABC transporter superfamily. ABCA family. CPR flippase (TC 3.A.1.211) subfamily.

The protein localises to the membrane. This Arabidopsis thaliana (Mouse-ear cress) protein is ABC transporter A family member 12 (ABCA12).